The sequence spans 88 residues: Small ribosomal subunit protein uS15c (88 aa).

This sequence belongs to the universal ribosomal protein uS15 family. As to quaternary structure, part of the 30S ribosomal subunit.

The protein localises to the plastid. It is found in the chloroplast. The polypeptide is Small ribosomal subunit protein uS15c (rps15) (Physcomitrium patens (Spreading-leaved earth moss)).